The sequence spans 230 residues: Claudin-2 (230 aa).

Residues 1-7 (MASLGVQ) are Cytoplasmic-facing. The helical transmembrane segment at 8–28 (LVGYILGLLGLLGTSIAMLLP) threads the bilayer. Residues 29–81 (NWRTSSYVGASIVTAVGFSKGLWMECATHSTGITQCDIYSTLLGLPADIQAAQ) are Extracellular-facing. Cys-54 and Cys-64 are disulfide-bonded. The chain crosses the membrane as a helical span at residues 82-102 (AMMVTSSAMSSLACIISVVGM). At 103 to 116 (RCTVFCQDSRAKDR) the chain is on the cytoplasmic side. Residues 117-137 (VAVVGGVFFILGGILGFIPVA) form a helical membrane-spanning segment. Over 138–162 (WNLHGILRDFYSPLVPDSMKFEIGE) the chain is Extracellular. A helical transmembrane segment spans residues 163-183 (ALYLGIISALFSLVAGVILCF). Over 184–230 (SCSPQGNRTNYYDGYQAQPLATRSSPRSAQQPKAKSEFNSYSLTGYV) the chain is Cytoplasmic. A disordered region spans residues 205-230 (TRSSPRSAQQPKAKSEFNSYSLTGYV). Lys-218 is covalently cross-linked (Glycyl lysine isopeptide (Lys-Gly) (interchain with G-Cter in SUMO)). 2 positions are modified to phosphoserine: Ser-219 and Ser-223. The tract at residues 229–230 (YV) is interactions with TJP1, TJP2 and TJP3.

The protein belongs to the claudin family. In terms of assembly, can form homo- and heteropolymers with other claudins to mediate paracellular barrier and channel functions of tight junctions in response to physiological stimuli. Homopolymers interact with CLDN3, but not CLDN1, homopolymers. Directly interacts with TJP1/ZO-1, TJP2/ZO-2 and TJP3/ZO-3. In terms of processing, the disulfide bond is necessary for pore formation, but is not required for correct protein trafficking. In terms of tissue distribution, expressed in the kidney, liver and intestine, with higher levels in the ileum than in the jejunum. Low levels in the brain. Expressed in colonic epithelium (at protein level). Expressed in the perivenous regions, bile ducts, and gallbladder epithelium (at protein level).

It localises to the cell junction. Its subcellular location is the tight junction. It is found in the cell membrane. It carries out the reaction Na(+)(in) = Na(+)(out). The enzyme catalyses K(+)(in) = K(+)(out). The catalysed reaction is Rb(+)(in) = Rb(+)(out). It catalyses the reaction Li(+)(in) = Li(+)(out). It carries out the reaction Cs(+)(in) = Cs(+)(out). The enzyme catalyses Ca(2+)(in) = Ca(2+)(out). The catalysed reaction is methylamine(out) = methylamine(in). It catalyses the reaction choline(out) = choline(in). It carries out the reaction H2O(in) = H2O(out). With respect to regulation, the channel permeability is down-regulated at acidic pH. Functionally, forms paracellular channels: polymerizes in tight junction strands with cation- and water-selective channels through the strands, conveying epithelial permeability in a process known as paracellular tight junction permeability. In intestinal epithelium, allows for sodium and water fluxes from the peritoneal side to the lumen of the intestine to regulate nutrient absorption and clear enteric pathogens as part of mucosal immune response. In kidney, allows passive sodium and calcium reabsorption across proximal tubules from the lumen back to the bloodstream. In the hepatobiliary tract, allows paracellular water and cation fluxes in the hepatic perivenous areas and biliary epithelium to generate bile flow and maintain osmotic gradients. The polypeptide is Claudin-2 (Mus musculus (Mouse)).